The chain runs to 443 residues: Transcriptional adapter 2-alpha (443 aa).

S6 bears the Phosphoserine mark. The ZZ-type zinc finger occupies 12–69 (SDKPPCRGCSSYLTEPYIKCAECGPPPFFLCLQCFTRGFEYKKHQSDHTYEIMTSDFP). 8 residues coordinate Zn(2+): C17, C20, C31, C34, C42, C45, H55, and H59. The SANT domain occupies 70–122 (VLDPSWTAQEEMALLEAVMDCGFGNWQDVANQMCTKTKEECEKHYMKHFINNP). Glycyl lysine isopeptide (Lys-Gly) (interchain with G-Cter in SUMO2) cross-links involve residues K132 and K138. The SWIRM domain maps to 356–443 (NSGRRSAPPL…LIREGYITKA (88 aa)). The DNA-binding element occupies 426 to 435 (KTRKIYDFLI).

As to quaternary structure, interacts with GCN5. Interacts with NR3C1. Associated with the P/CAF protein in the PCAF complex. Component of the PCAF complex, at least composed of TADA2L/ADA2, TADA3L/ADA3, TAF5L/PAF65-beta, TAF6L/PAF65-alpha, TAF10/TAFII30, TAF12/TAFII20, TAF9/TAFII31 and TRRAP. Component of the ADA2A-containing complex (ATAC), composed of KAT14, KAT2A, TADA2L, TADA3L, ZZ3, MBIP, WDR5, YEATS2, CCDC101 and DR1. Interacts with CCDC134.

The protein localises to the nucleus. The protein resides in the chromosome. Functionally, component of the ATAC complex, a complex with histone acetyltransferase activity on histones H3 and H4. Required for the function of some acidic activation domains, which activate transcription from a distant site. Binds double-stranded DNA. Binds dinucleosomes, probably at the linker region between neighboring nucleosomes. Plays a role in chromatin remodeling. May promote TP53/p53 'Lys-321' acetylation, leading to reduced TP53 stability and transcriptional activity. May also promote XRCC6 acetylation thus facilitating cell apoptosis in response to DNA damage. The chain is Transcriptional adapter 2-alpha (Tada2a) from Mus musculus (Mouse).